The chain runs to 5058 residues: ATP-binding cassette sub-family A member 13 (5058 aa).

A run of 7 helical transmembrane segments spans residues 23 to 43, 3568 to 3588, 3607 to 3627, 3648 to 3668, 3679 to 3699, 3709 to 3729, and 3752 to 3772; these read PVLFLAEFFWPCILFVILTVL, VGFFFPLIMMLTWMVSVASMV, GVHPVIHFLAWFLENMAVLTI, FIVFLFLLDFGMSVVMLSYLL, ALCTSLVYMISFLPYIVLLVL, TFLCLLSTTAFGQGVFFITFL, and FGWVCWMILFDSSLYFLCGWY. One can recognise an ABC transporter 1 domain in the interval 3842–4074; the sequence is VTLVSVTKEY…YGQGLRLTLT (233 aa). Residue 3875–3882 participates in ATP binding; that stretch reads GTNGAGKT. The next 7 membrane-spanning stretches (helical) occupy residues 4226–4246, 4458–4478, 4504–4524, 4536–4556, 4568–4588, 4607–4627, and 4651–4671; these read TLADLLLPVLFVALAMGLFMV, VALCIVLGFSILSASIGSSVV, FLYDMLFYLVSVCLCVAVIVA, LAATALLLSLFGYATLPWMYL, FISYVSLNFIFGLCTMLITIM, VLKWVFTIFPQFCLGQGLVEL, and MNFLGWIFVQLASQGTVLLLL. The region spanning 4718 to 4956 is the ABC transporter 2 domain; sequence LVLYNLSKHY…FGDGYTVKVW (239 aa). Position 4754 to 4761 (4754 to 4761) interacts with ATP; the sequence is GVNGAGKS.

It belongs to the ABC transporter superfamily. In terms of tissue distribution, significantly expressed in the bone marrow, trachea, testis, thyroid and lung as well as in skin fibroblasts.

The protein resides in the cytoplasmic vesicle membrane. The enzyme catalyses cholesterol(in) + ATP + H2O = cholesterol(out) + ADP + phosphate + H(+). Functionally, may mediate the cholesterol and gangliosides transport from the plasma membrane to intracellular vesicles in an ATP hydrolysis dependent manner, thus playing a role in their internalization by endocytic retrograde transport and may also participate in the endocytosis of synaptic vesicle in cortical neurons. The polypeptide is ATP-binding cassette sub-family A member 13 (Homo sapiens (Human)).